We begin with the raw amino-acid sequence, 647 residues long: Threonine--tRNA ligase (647 aa).

One can recognise a TGS domain in the interval Met1–Val63. The tract at residues Asp244 to Pro535 is catalytic. Cys336, His387, and His512 together coordinate Zn(2+).

The protein belongs to the class-II aminoacyl-tRNA synthetase family. As to quaternary structure, homodimer. It depends on Zn(2+) as a cofactor.

It localises to the cytoplasm. The catalysed reaction is tRNA(Thr) + L-threonine + ATP = L-threonyl-tRNA(Thr) + AMP + diphosphate + H(+). Functionally, catalyzes the attachment of threonine to tRNA(Thr) in a two-step reaction: L-threonine is first activated by ATP to form Thr-AMP and then transferred to the acceptor end of tRNA(Thr). Also edits incorrectly charged L-seryl-tRNA(Thr). The protein is Threonine--tRNA ligase of Desulfovibrio desulfuricans (strain ATCC 27774 / DSM 6949 / MB).